Here is a 554-residue protein sequence, read N- to C-terminus: Putative mediator of RNA polymerase II transcription subunit 29 (554 aa).

4 disordered regions span residues 118–301, 330–381, 398–428, and 483–524; these read DNKA…NTEA, QQQQ…PLPQ, LENQ…LQLQ, and NTNL…DDNT. The span at 122-210 shows a compositional bias: low complexity; the sequence is NTNNNNNNNN…NNSINNNSNN (89 aa). Positions 167 to 194 form a coiled coil; the sequence is NNNNNNNYNNNNNNNNNNNNNNNNNNNN. Polar residues predominate over residues 211 to 225; the sequence is KVGSNDNPSTAPITE. Residues 226-264 show a composition bias toward low complexity; sequence NNTENNAGNTNNTNNNNNNNNNNNNNNNNNNNNNNNNTN. A compositionally biased stretch (polar residues) spans 265–300; the sequence is QVAESSNISSNTTPPETTNIVNDPNSVSGGNLTNTE. 3 stretches are compositionally biased toward low complexity: residues 330-374, 419-428, and 483-517; these read QQQQ…QQPQ, QQQQEQLQLQ, and NTNL…PEIN. A coiled-coil region spans residues 419-486; the sequence is QQQQEQLQLQ…SLENQINTNL (68 aa).

Belongs to the Mediator complex subunit 29 family. In terms of assembly, component of the Mediator complex.

Its subcellular location is the nucleus. Component of the Mediator complex, a coactivator involved in the regulated transcription of nearly all RNA polymerase II-dependent genes. Mediator functions as a bridge to convey information from gene-specific regulatory proteins to the basal RNA polymerase II transcription machinery. Mediator is recruited to promoters by direct interactions with regulatory proteins and serves as a scaffold for the assembly of a functional preinitiation complex with RNA polymerase II and the general transcription factors. This Dictyostelium discoideum (Social amoeba) protein is Putative mediator of RNA polymerase II transcription subunit 29 (med29).